We begin with the raw amino-acid sequence, 165 residues long: Neuropeptide W (165 aa).

Positions 1–32 are cleaved as a signal peptide; sequence MAWRPGERGAPASRPRLALLLLLLLLPLPSGA. Positions 65 to 165 are excised as a propeptide; that stretch reads ALRAAAGPLA…GLPCLAPGPF (101 aa). The interval 106-165 is disordered; it reads SQAGIPVRAPRSPRAPEPALEPESLDFSGAGQRLRRDVSRPAVDPAANRLGLPCLAPGPF. Residues 113-127 show a composition bias toward low complexity; the sequence is RAPRSPRAPEPALEP. Ser-133 carries O-linked (Xyl...) (chondroitin sulfate) serine glycosylation.

It belongs to the neuropeptide B/W family. As to expression, detected in cerebrospinal fluid and urine (at protein level). Detected at high levels in the substantia nigra, fetal kidney and trachea; at lower levels in testis, uterus, ovary and placenta. Not detectable in many regions of the central nervous system. Also detected at high levels in lymphoblastic leukemia and colorectal adenocarcinoma.

Its subcellular location is the secreted. Plays a regulatory role in the organization of neuroendocrine signals accessing the anterior pituitary gland. Stimulates water drinking and food intake. May play a role in the hypothalamic response to stress. NPW23 activates GPR7 and GPR8 more efficiently than NPW30. This Homo sapiens (Human) protein is Neuropeptide W (NPW).